A 589-amino-acid chain; its full sequence is UvrABC system protein C (589 aa).

Residues 10–87 form the GIY-YIG domain; the sequence is ESSGVYLMKK…IKKYSPKYNI (78 aa). Residues 197–232 enclose the UVR domain; that stretch reads SKLINELTALMNKASQDMDFEKSIIYREQIKELKSI.

The protein belongs to the UvrC family. As to quaternary structure, interacts with UvrB in an incision complex.

It is found in the cytoplasm. In terms of biological role, the UvrABC repair system catalyzes the recognition and processing of DNA lesions. UvrC both incises the 5' and 3' sides of the lesion. The N-terminal half is responsible for the 3' incision and the C-terminal half is responsible for the 5' incision. This chain is UvrABC system protein C, found in Fusobacterium nucleatum subsp. nucleatum (strain ATCC 25586 / DSM 15643 / BCRC 10681 / CIP 101130 / JCM 8532 / KCTC 2640 / LMG 13131 / VPI 4355).